The chain runs to 1211 residues: Diacylglycerol kinase eta (1211 aa).

Residues 1–66 form a disordered region; sequence MAGAGSQHHP…QMRTKTSIKE (66 aa). Residues 19–32 are compositionally biased toward low complexity; the sequence is AGASAVSPTAAGPG. The span at 52 to 61 shows a compositional bias: polar residues; that stretch reads VSTSGQMRTK. The PH domain maps to 62-155; sequence TSIKEGQLLK…WISSLKSVQS (94 aa). 2 Phorbol-ester/DAG-type zinc fingers span residues 172 to 222 and 244 to 295; these read MHNW…TNNC and PHQW…HPVC. The region spanning 325 to 460 is the DAGKc domain; it reads FCVSPLLVFV…LDRWSIMTYE (136 aa). 2 disordered regions span residues 562–613 and 634–694; these read SQAS…KPRE and KVMD…SVAG. 2 stretches are compositionally biased toward acidic residues: residues 576 to 589 and 653 to 662; these read PEEDTVESASDESL and YDTETDEAKE. The segment covering 670–691 has biased composition (polar residues); the sequence is SAKTTSQSPDAQASCGHPQTDS. Positions 1143 to 1206 constitute an SAM domain; that stretch reads WGTEEVAAWL…LQGIKELERN (64 aa).

The protein belongs to the eukaryotic diacylglycerol kinase family. Interacts with RAF1 and BRAF. In terms of assembly, homooligomers. Heterooligomers. Oligomerization through the SAM domain inhibits the diacylglycerol kinase activity. Heterooligomerizes with SAM domain-containing isoforms of DGKD. As to quaternary structure, does not form homooligomers. Phosphorylated. Phosphorylation does not inhibit catalytic activity. Widely expressed. Detected in the granulosa cells of the primary and secondary follicles. Expressed in mature follicles and corpus lutea. Expressed in the oviductal epithelium. In the uterus, strongly expressed in the luminal epithelium. Detected in the uterine glands. In terms of tissue distribution, detected in ovary and uterus (at protein level). As to expression, specifically expressed in testis. Detected in the inner area of the testis. Strongly expressed in the secondary spermatocytes and the round spermatids and weakly detected in the primary spermatocytes.

Its subcellular location is the cytoplasm. The protein resides in the cell membrane. The protein localises to the cytoskeleton. The enzyme catalyses a 1,2-diacyl-sn-glycerol + ATP = a 1,2-diacyl-sn-glycero-3-phosphate + ADP + H(+). It catalyses the reaction 1,2-di-(9Z-octadecenoyl)-sn-glycerol + ATP = 1,2-di-(9Z-octadecenoyl)-sn-glycero-3-phosphate + ADP + H(+). It participates in lipid metabolism; glycerolipid metabolism. Diacylglycerol kinase that converts diacylglycerol/DAG into phosphatidic acid/phosphatidate/PA and regulates the respective levels of these two bioactive lipids. Thereby, acts as a central switch between the signaling pathways activated by these second messengers with different cellular targets and opposite effects in numerous biological processes. Plays a key role in promoting cell growth. Activates the Ras/B-Raf/C-Raf/MEK/ERK signaling pathway induced by EGF. Regulates the recruitment of RAF1 and BRAF from cytoplasm to membranes and their heterodimerization. The sequence is that of Diacylglycerol kinase eta from Mus musculus (Mouse).